We begin with the raw amino-acid sequence, 231 residues long: 2-C-methyl-D-erythritol 4-phosphate cytidylyltransferase (231 aa).

The protein belongs to the IspD/TarI cytidylyltransferase family. IspD subfamily. As to quaternary structure, homodimer.

The enzyme catalyses 2-C-methyl-D-erythritol 4-phosphate + CTP + H(+) = 4-CDP-2-C-methyl-D-erythritol + diphosphate. It functions in the pathway isoprenoid biosynthesis; isopentenyl diphosphate biosynthesis via DXP pathway; isopentenyl diphosphate from 1-deoxy-D-xylulose 5-phosphate: step 2/6. Its function is as follows. Catalyzes the formation of 4-diphosphocytidyl-2-C-methyl-D-erythritol from CTP and 2-C-methyl-D-erythritol 4-phosphate (MEP). The polypeptide is 2-C-methyl-D-erythritol 4-phosphate cytidylyltransferase (Citrobacter koseri (strain ATCC BAA-895 / CDC 4225-83 / SGSC4696)).